The chain runs to 28 residues: Short cationic peptide-1c (28 aa).

The residue at position 28 (E28) is a Glutamic acid 1-amide.

In terms of tissue distribution, expressed by the venom gland.

Its subcellular location is the secreted. This Cupiennius salei (American wandering spider) protein is Short cationic peptide-1c.